Consider the following 308-residue polypeptide: Thymidylate synthase (308 aa).

DUMP contacts are provided by residues R26 and 170 to 171 (RR). The Nucleophile role is filled by C190. DUMP is bound by residues 210–213 (RSCD), N221, and 251–253 (HVY). D213 contacts (6R)-5,10-methylene-5,6,7,8-tetrahydrofolate. Position 307 (A307) interacts with (6R)-5,10-methylene-5,6,7,8-tetrahydrofolate.

This sequence belongs to the thymidylate synthase family. Bacterial-type ThyA subfamily. Homodimer.

The protein resides in the cytoplasm. It carries out the reaction dUMP + (6R)-5,10-methylene-5,6,7,8-tetrahydrofolate = 7,8-dihydrofolate + dTMP. It functions in the pathway pyrimidine metabolism; dTTP biosynthesis. Its function is as follows. Catalyzes the reductive methylation of 2'-deoxyuridine-5'-monophosphate (dUMP) to 2'-deoxythymidine-5'-monophosphate (dTMP) while utilizing 5,10-methylenetetrahydrofolate (mTHF) as the methyl donor and reductant in the reaction, yielding dihydrofolate (DHF) as a by-product. This enzymatic reaction provides an intracellular de novo source of dTMP, an essential precursor for DNA biosynthesis. The chain is Thymidylate synthase from Rhizorhabdus wittichii (strain DSM 6014 / CCUG 31198 / JCM 15750 / NBRC 105917 / EY 4224 / RW1) (Sphingomonas wittichii).